Consider the following 273-residue polypeptide: 4-hydroxy-tetrahydrodipicolinate reductase (273 aa).

NAD(+) is bound by residues 8–13 (GACGRM), Glu34, 102–104 (GTT), and 128–131 (APNM). The active-site Proton donor/acceptor is the His160. A (S)-2,3,4,5-tetrahydrodipicolinate-binding site is contributed by His161. Residue Lys164 is the Proton donor of the active site. 170–171 (GT) provides a ligand contact to (S)-2,3,4,5-tetrahydrodipicolinate.

The protein belongs to the DapB family.

The protein resides in the cytoplasm. It catalyses the reaction (S)-2,3,4,5-tetrahydrodipicolinate + NAD(+) + H2O = (2S,4S)-4-hydroxy-2,3,4,5-tetrahydrodipicolinate + NADH + H(+). The catalysed reaction is (S)-2,3,4,5-tetrahydrodipicolinate + NADP(+) + H2O = (2S,4S)-4-hydroxy-2,3,4,5-tetrahydrodipicolinate + NADPH + H(+). It participates in amino-acid biosynthesis; L-lysine biosynthesis via DAP pathway; (S)-tetrahydrodipicolinate from L-aspartate: step 4/4. Its function is as follows. Catalyzes the conversion of 4-hydroxy-tetrahydrodipicolinate (HTPA) to tetrahydrodipicolinate. The sequence is that of 4-hydroxy-tetrahydrodipicolinate reductase from Methanothermobacter thermautotrophicus (strain ATCC 29096 / DSM 1053 / JCM 10044 / NBRC 100330 / Delta H) (Methanobacterium thermoautotrophicum).